The following is a 556-amino-acid chain: Beta-caryophyllene synthase TPS9FN (556 aa).

Positions 273, 310, 314, 451, and 454 each coordinate (2E,6E)-farnesyl diphosphate. D310 and D314 together coordinate Mg(2+). The DDXXD motif motif lies at 310-314; the sequence is DDIYD. D454, S458, and E462 together coordinate Mg(2+).

It belongs to the terpene synthase family. Tpsb subfamily. The cofactor is Mg(2+). Mn(2+) serves as cofactor. Expressed in glandular trichomes two to four weeks after flowering onset.

The catalysed reaction is (2E,6E)-farnesyl diphosphate = (-)-(E)-beta-caryophyllene + diphosphate. It carries out the reaction (2E,6E)-farnesyl diphosphate = alpha-humulene + diphosphate. It participates in secondary metabolite biosynthesis; terpenoid biosynthesis. In terms of biological role, involved in sesquiterpene olefins biosynthesis, constituants of cannabinoids and terpenoids-rich resins. Catalyzes mainly the conversion of (2E)-farnesyl diphosphate to beta-caryophyllene and alpha-humulene. Can also use (2E)-geranyl diphosphate as substrate with low efficiency. This Cannabis sativa (Hemp) protein is Beta-caryophyllene synthase TPS9FN.